The sequence spans 347 residues: Isopentenyl-diphosphate delta-isomerase (347 aa).

Positions 1–31 are disordered; sequence MDESNSQFEKRKRDHIRIALDPRSQTDGQNG. Basic and acidic residues predominate over residues 8–20; sequence FEKRKRDHIRIAL. Residue 11-12 participates in substrate binding; it reads RK. FMN-binding positions include serine 72, 73–75, serine 103, and asparagine 132; that span reads SMT. Residue 103 to 105 coordinates substrate; sequence SQR. Glutamine 166 provides a ligand contact to substrate. Glutamate 167 serves as a coordination point for Mg(2+). FMN is bound by residues lysine 198, serine 223, threonine 228, 279–281, and 300–301; these read GVR and AK.

This sequence belongs to the IPP isomerase type 2 family. Homooctamer. Dimer of tetramers. The cofactor is FMN. NADPH serves as cofactor. Requires Mg(2+) as cofactor.

It is found in the cytoplasm. The enzyme catalyses isopentenyl diphosphate = dimethylallyl diphosphate. Its function is as follows. Involved in the biosynthesis of isoprenoids. Catalyzes the 1,3-allylic rearrangement of the homoallylic substrate isopentenyl (IPP) to its allylic isomer, dimethylallyl diphosphate (DMAPP). This chain is Isopentenyl-diphosphate delta-isomerase, found in Bdellovibrio bacteriovorus (strain ATCC 15356 / DSM 50701 / NCIMB 9529 / HD100).